Reading from the N-terminus, the 119-residue chain is Large ribosomal subunit protein bL17 (119 aa).

Belongs to the bacterial ribosomal protein bL17 family. Part of the 50S ribosomal subunit. Contacts protein L32.

This chain is Large ribosomal subunit protein bL17, found in Mesoplasma florum (strain ATCC 33453 / NBRC 100688 / NCTC 11704 / L1) (Acholeplasma florum).